A 250-amino-acid chain; its full sequence is Tryptophan synthase alpha chain (250 aa).

Catalysis depends on proton acceptor residues glutamate 31 and aspartate 42.

The protein belongs to the TrpA family. As to quaternary structure, tetramer of two alpha and two beta chains.

It carries out the reaction (1S,2R)-1-C-(indol-3-yl)glycerol 3-phosphate + L-serine = D-glyceraldehyde 3-phosphate + L-tryptophan + H2O. It functions in the pathway amino-acid biosynthesis; L-tryptophan biosynthesis; L-tryptophan from chorismate: step 5/5. In terms of biological role, the alpha subunit is responsible for the aldol cleavage of indoleglycerol phosphate to indole and glyceraldehyde 3-phosphate. In Staphylococcus carnosus (strain TM300), this protein is Tryptophan synthase alpha chain.